The following is a 279-amino-acid chain: Movement protein (279 aa).

A disordered region spans residues 247–279 (ESEELNVESPPAAIGSSSASRSEAFRPQVVNGL). Residues 254 to 268 (ESPPAAIGSSSASRS) are compositionally biased toward low complexity.

The protein belongs to the cucumovirus movement protein family.

The protein resides in the host cell junction. It is found in the host plasmodesma. Its function is as follows. Transports viral genome to neighboring plant cells directly through plasmosdesmata, without any budding. The movement protein allows efficient cell to cell propagation, by bypassing the host cell wall barrier. Acts by forming a tubular structure at the host plasmodesmata, enlarging it enough to allow free passage of virion capsids. The sequence is that of Movement protein from Cucumis sativus (Cucumber).